The chain runs to 78 residues: Acyl carrier protein (78 aa).

Residues 1 to 77 (MSEVEKKVID…DAIDYIEKNL (77 aa)) enclose the Carrier domain. Ser-37 is subject to O-(pantetheine 4'-phosphoryl)serine.

Belongs to the acyl carrier protein (ACP) family. Post-translationally, 4'-phosphopantetheine is transferred from CoA to a specific serine of apo-ACP by AcpS. This modification is essential for activity because fatty acids are bound in thioester linkage to the sulfhydryl of the prosthetic group.

The protein localises to the cytoplasm. It participates in lipid metabolism; fatty acid biosynthesis. In terms of biological role, carrier of the growing fatty acid chain in fatty acid biosynthesis. The chain is Acyl carrier protein from Porphyromonas gingivalis (strain ATCC 33277 / DSM 20709 / CIP 103683 / JCM 12257 / NCTC 11834 / 2561).